The primary structure comprises 467 residues: Tyrosine phenol-lyase (467 aa).

An N6-(pyridoxal phosphate)lysine modification is found at Lys-268.

It belongs to the beta-eliminating lyase family. Homotetramer. Pyridoxal 5'-phosphate is required as a cofactor.

It carries out the reaction L-tyrosine + H2O = phenol + pyruvate + NH4(+). The polypeptide is Tyrosine phenol-lyase (Nostoc punctiforme (strain ATCC 29133 / PCC 73102)).